The following is a 370-amino-acid chain: Ubiquinone biosynthesis O-methyltransferase, mitochondrial (370 aa).

A mitochondrion-targeting transit peptide spans Met1–Tyr86. S-adenosyl-L-methionine is bound at residue Arg125. N6-acetyllysine occurs at positions 144 and 150. The S-adenosyl-L-methionine site is built by Gly155 and Asp176. N6-acetyllysine is present on Lys197. Position 223 (Ser223) interacts with S-adenosyl-L-methionine. 3 residues coordinate Mg(2+): Glu224, Glu227, and His228.

The protein belongs to the class I-like SAM-binding methyltransferase superfamily. UbiG/COQ3 family. Component of a multi-subunit COQ enzyme complex, composed of at least COQ3, COQ4, COQ5, COQ6, COQ7 and COQ9. Requires Mg(2+) as cofactor.

The protein resides in the mitochondrion inner membrane. The catalysed reaction is 3,4-dihydroxy-5-(all-trans-decaprenyl)benzoate + S-adenosyl-L-methionine = 4-hydroxy-3-methoxy-5-(all-trans-decaprenyl)benzoate + S-adenosyl-L-homocysteine + H(+). It carries out the reaction a 3-demethylubiquinone + S-adenosyl-L-methionine = a ubiquinone + S-adenosyl-L-homocysteine. It catalyses the reaction 3-demethylubiquinol-10 + S-adenosyl-L-methionine = ubiquinol-10 + S-adenosyl-L-homocysteine + H(+). Its pathway is cofactor biosynthesis; ubiquinone biosynthesis. Functionally, O-methyltransferase required for two non-consecutive steps during ubiquinone biosynthesis. Catalyzes the 2 O-methylation of 3,4-dihydroxy-5-(all-trans-decaprenyl)benzoic acid into 4-hydroxy-3-methoxy-5-(all-trans-decaprenyl)benzoic acid. Also catalyzes the last step of ubiquinone biosynthesis by mediating methylation of 3-demethylubiquinone into ubiquinone. Also able to mediate the methylation of 3-demethylubiquinol-10 into ubiquinol-10. In Bos taurus (Bovine), this protein is Ubiquinone biosynthesis O-methyltransferase, mitochondrial.